The chain runs to 277 residues: Large ribosomal subunit protein uL2 (277 aa).

A disordered region spans residues 222-259; the sequence is GSVMNPNDHPHGGGEGKSPVGRPSPVTPWGKPALGYKT.

Belongs to the universal ribosomal protein uL2 family. In terms of assembly, part of the 50S ribosomal subunit. Forms a bridge to the 30S subunit in the 70S ribosome.

Functionally, one of the primary rRNA binding proteins. Required for association of the 30S and 50S subunits to form the 70S ribosome, for tRNA binding and peptide bond formation. It has been suggested to have peptidyltransferase activity; this is somewhat controversial. Makes several contacts with the 16S rRNA in the 70S ribosome. This chain is Large ribosomal subunit protein uL2, found in Clostridium beijerinckii (strain ATCC 51743 / NCIMB 8052) (Clostridium acetobutylicum).